Reading from the N-terminus, the 890-residue chain is Protein translocase subunit SecA (890 aa).

Residues glutamine 86, 104 to 108 (GEGKT), and aspartate 493 contribute to the ATP site. A compositionally biased stretch (basic and acidic residues) spans 851–872 (EASHGDGDAKKAPVVKKEESGR). Residues 851–873 (EASHGDGDAKKAPVVKKEESGRN) form a disordered region. Residues cysteine 876, cysteine 878, cysteine 887, and cysteine 888 each coordinate Zn(2+).

This sequence belongs to the SecA family. As to quaternary structure, monomer and homodimer. Part of the essential Sec protein translocation apparatus which comprises SecA, SecYEG and auxiliary proteins SecDF. Other proteins may also be involved. Zn(2+) is required as a cofactor.

The protein resides in the cell membrane. It is found in the cytoplasm. The enzyme catalyses ATP + H2O + cellular proteinSide 1 = ADP + phosphate + cellular proteinSide 2.. Functionally, part of the Sec protein translocase complex. Interacts with the SecYEG preprotein conducting channel. Has a central role in coupling the hydrolysis of ATP to the transfer of proteins into and across the cell membrane, serving as an ATP-driven molecular motor driving the stepwise translocation of polypeptide chains across the membrane. The polypeptide is Protein translocase subunit SecA (Alkaliphilus oremlandii (strain OhILAs) (Clostridium oremlandii (strain OhILAs))).